The chain runs to 673 residues: UvrABC system protein B (673 aa).

In terms of domain architecture, Helicase ATP-binding spans 26-183 (EGLEDGLAHQ…RRLAELQYTR (158 aa)). 39–46 (GVTGSGKT) contacts ATP. Residues 92-115 (YYDYYQPEAYVPSSDTFIEKDASV) carry the Beta-hairpin motif. The Helicase C-terminal domain occupies 431 to 597 (QVDDLLSEIR…GLNKKVVDIL (167 aa)). Residues 633–668 (QQKIHELEGQMMQHAQNLEFEEAAQIRDQLHQLREL) form the UVR domain.

Belongs to the UvrB family. As to quaternary structure, forms a heterotetramer with UvrA during the search for lesions. Interacts with UvrC in an incision complex.

Its subcellular location is the cytoplasm. The UvrABC repair system catalyzes the recognition and processing of DNA lesions. A damage recognition complex composed of 2 UvrA and 2 UvrB subunits scans DNA for abnormalities. Upon binding of the UvrA(2)B(2) complex to a putative damaged site, the DNA wraps around one UvrB monomer. DNA wrap is dependent on ATP binding by UvrB and probably causes local melting of the DNA helix, facilitating insertion of UvrB beta-hairpin between the DNA strands. Then UvrB probes one DNA strand for the presence of a lesion. If a lesion is found the UvrA subunits dissociate and the UvrB-DNA preincision complex is formed. This complex is subsequently bound by UvrC and the second UvrB is released. If no lesion is found, the DNA wraps around the other UvrB subunit that will check the other stand for damage. This is UvrABC system protein B from Salmonella agona (strain SL483).